The chain runs to 91 residues: Small ribosomal subunit protein bS18 (91 aa).

The disordered stretch occupies residues 1–27; sequence MTQQSNTERKPRAKGPKRPRKPKVDPF. The segment covering 11–21 has biased composition (basic residues); it reads PRAKGPKRPRK.

The protein belongs to the bacterial ribosomal protein bS18 family. As to quaternary structure, part of the 30S ribosomal subunit. Forms a tight heterodimer with protein bS6.

In terms of biological role, binds as a heterodimer with protein bS6 to the central domain of the 16S rRNA, where it helps stabilize the platform of the 30S subunit. This chain is Small ribosomal subunit protein bS18, found in Deinococcus geothermalis (strain DSM 11300 / CIP 105573 / AG-3a).